A 170-amino-acid chain; its full sequence is Shikimate kinase (170 aa).

Residue 11-16 (LSGKST) coordinates ATP. Ser-15 contacts Mg(2+). Substrate-binding residues include Asp-33, Arg-57, and Gly-79. Arg-119 is an ATP binding site. Position 137 (Arg-137) interacts with substrate.

Belongs to the shikimate kinase family. Monomer. Mg(2+) serves as cofactor.

It localises to the cytoplasm. It carries out the reaction shikimate + ATP = 3-phosphoshikimate + ADP + H(+). It participates in metabolic intermediate biosynthesis; chorismate biosynthesis; chorismate from D-erythrose 4-phosphate and phosphoenolpyruvate: step 5/7. In terms of biological role, catalyzes the specific phosphorylation of the 3-hydroxyl group of shikimic acid using ATP as a cosubstrate. The protein is Shikimate kinase of Clostridium botulinum (strain Loch Maree / Type A3).